The primary structure comprises 448 residues: MNRQLMEAYIRQKRASPGMVQASDLQINRPMSGMRSNSRELHAYDGPMQFISSPQNPDQILSNGSPGGITPVAMNTSRNHSNNMRSLSTINQEADLIEEISSHELEDEESSPVTVIEQHQQSASHSANSTQSQKPRARQHSFSDNLDEDDYTNRNVAGAAPVRPAGMASSPYKDATLEGSSNGTGNGTGGESEGDVIGNIDQFVMQPAPQGVLYKCRITRDRKGMDRGLFPIYYLHLERDYGKKIFLLGGRKRKKSKTSNYIVSCDPTDLSRNADGFCGKLRSNVFGTSFTVFDNGNKESTESPRLDLAVIIYDTNILGFKGPRNMTVILPGMTEDDQRVKISSADPKQQGILDLWKMKNMDNIVELHNKTPVWNDETQSYVLNFHGRVTQASVKNFQLVHDSDPEYIVMQFGRTSEDVFTMDYRYPLCAMQAFAIALSSFDGKIACE.

The interval 103 to 195 (HELEDEESSP…NGTGGESEGD (93 aa)) is disordered. Positions 118-133 (QHQQSASHSANSTQSQ) are enriched in low complexity. A Phosphoserine modification is found at Ser141. The segment covering 182–191 (NGTGNGTGGE) has biased composition (gly residues).

The protein belongs to the TUB family.

The protein localises to the cytoplasm. It localises to the nucleus. The protein resides in the cell projection. It is found in the cilium membrane. Its subcellular location is the rhabdomere. The protein is Protein king tubby of Drosophila erecta (Fruit fly).